The following is a 190-amino-acid chain: NADH-ubiquinone oxidoreductase 75 kDa subunit, mitochondrial (190 aa).

Belongs to the complex I 75 kDa subunit family. In terms of assembly, core subunit of respiratory chain NADH dehydrogenase (Complex I) which is composed of 45 different subunits. This is the largest subunit of complex I and it is a component of the iron-sulfur (IP) fragment of the enzyme. Complex I associates with ubiquinol-cytochrome reductase complex (Complex III) to form supercomplexes. Interacts with MDM2 and AKAP1. The cofactor is [2Fe-2S] cluster. [4Fe-4S] cluster serves as cofactor.

It is found in the mitochondrion inner membrane. It catalyses the reaction a ubiquinone + NADH + 5 H(+)(in) = a ubiquinol + NAD(+) + 4 H(+)(out). Its function is as follows. Core subunit of the mitochondrial membrane respiratory chain NADH dehydrogenase (Complex I) which catalyzes electron transfer from NADH through the respiratory chain, using ubiquinone as an electron acceptor. Essential for catalysing the entry and efficient transfer of electrons within complex I. Plays a key role in the assembly and stability of complex I and participates in the association of complex I with ubiquinol-cytochrome reductase complex (Complex III) to form supercomplexes. The chain is NADH-ubiquinone oxidoreductase 75 kDa subunit, mitochondrial from Mesocricetus auratus (Golden hamster).